The sequence spans 475 residues: Rho GTPase-activating protein 15 (475 aa).

Residues 1–22 (MERSTTSDTASEKPNPSHSTGA) form a disordered region. The 111-residue stretch at 80 to 190 (VVEKEGYLLK…WFHAIKNAID (111 aa)) folds into the PH domain. The 190-residue stretch at 281–470 (SHLHLVCEHE…LMLSEYSKIF (190 aa)) folds into the Rho-GAP domain.

The protein resides in the cytoplasm. It is found in the membrane. In terms of biological role, GTPase activator for the Rho-type GTPases by converting them to an inactive GDP-bound state. The sequence is that of Rho GTPase-activating protein 15 (ARHGAP15) from Gallus gallus (Chicken).